Reading from the N-terminus, the 240-residue chain is Orotidine 5'-phosphate decarboxylase (240 aa).

Substrate-binding positions include Asp-19, Lys-41, 68–77, Thr-123, Arg-184, Gln-193, Gly-213, and Arg-214; that span reads DYKYYDIEET. Lys-70 functions as the Proton donor in the catalytic mechanism.

The protein belongs to the OMP decarboxylase family. Type 1 subfamily. As to quaternary structure, homodimer.

The enzyme catalyses orotidine 5'-phosphate + H(+) = UMP + CO2. It functions in the pathway pyrimidine metabolism; UMP biosynthesis via de novo pathway; UMP from orotate: step 2/2. Catalyzes the decarboxylation of orotidine 5'-monophosphate (OMP) to uridine 5'-monophosphate (UMP). This chain is Orotidine 5'-phosphate decarboxylase, found in Nitrobacter winogradskyi (strain ATCC 25391 / DSM 10237 / CIP 104748 / NCIMB 11846 / Nb-255).